The following is a 125-amino-acid chain: Fluoride-specific ion channel FluC (125 aa).

4 helical membrane passes run 1–21, 32–52, 68–88, and 101–121; these read MIQA…RYYV, AFPW…GVFA, LLIT…LDAI, and IYIA…LAVM. The Na(+) site is built by Gly-75 and Thr-78.

This sequence belongs to the fluoride channel Fluc/FEX (TC 1.A.43) family.

Its subcellular location is the cell inner membrane. The catalysed reaction is fluoride(in) = fluoride(out). With respect to regulation, na(+) is not transported, but it plays an essential structural role and its presence is essential for fluoride channel function. Functionally, fluoride-specific ion channel. Important for reducing fluoride concentration in the cell, thus reducing its toxicity. In Rhizobium etli (strain CIAT 652), this protein is Fluoride-specific ion channel FluC.